We begin with the raw amino-acid sequence, 98 residues long: MGSLTKADLAENLVDSIGLSKKDAKDLVEGFFDVVRSSLIERQQVKLSGFGNFEVREKSQRPGRNPKTGEEIPITARTVVTFRPGQKLKSKVEDYMQE.

Belongs to the bacterial histone-like protein family. As to quaternary structure, heterodimer of an alpha and a beta chain.

Its function is as follows. This protein is one of the two subunits of integration host factor, a specific DNA-binding protein that functions in genetic recombination as well as in transcriptional and translational control. This Marinomonas sp. (strain MWYL1) protein is Integration host factor subunit alpha.